The sequence spans 191 residues: Oleosin 20.3 kDa (191 aa).

A2 carries the post-translational modification N-acetylalanine. Residues 2–54 (ANVDRDRRVHVDRTDKRVHQPNYEDDVGFGGYGGYGAGSDYKSRGPSTNQILA) are polar. Helical transmembrane passes span 52 to 72 (ILALIAGVPIGGTLLTLAGLT) and 99 to 119 (LTIGLAVTGILASGLFGLTGL). The segment at 55-128 (LIAGVPIGGT…LSSVSWVLNY (74 aa)) is hydrophobic.

Belongs to the oleosin family.

It localises to the lipid droplet. It is found in the membrane. Its function is as follows. May have a structural role to stabilize the lipid body during desiccation of the seed by preventing coalescence of the oil. Probably interacts with both lipid and phospholipid moieties of lipid bodies. May also provide recognition signals for specific lipase anchorage in lipolysis during seedling growth. The protein is Oleosin 20.3 kDa (OL2) of Arabidopsis thaliana (Mouse-ear cress).